A 208-amino-acid chain; its full sequence is NAD(P)H-quinone oxidoreductase subunit I (208 aa).

4Fe-4S ferredoxin-type domains follow at residues 55-84 (GRIH…VDWV) and 95-124 (RNYS…MTEE). The [4Fe-4S] cluster site is built by Cys-64, Cys-67, Cys-70, Cys-74, Cys-104, Cys-107, Cys-110, and Cys-114.

The protein belongs to the complex I 23 kDa subunit family. As to quaternary structure, NDH-1 is composed of at least 11 different subunits. [4Fe-4S] cluster serves as cofactor.

The protein localises to the cellular thylakoid membrane. The catalysed reaction is a plastoquinone + NADH + (n+1) H(+)(in) = a plastoquinol + NAD(+) + n H(+)(out). It catalyses the reaction a plastoquinone + NADPH + (n+1) H(+)(in) = a plastoquinol + NADP(+) + n H(+)(out). Functionally, NDH-1 shuttles electrons from an unknown electron donor, via FMN and iron-sulfur (Fe-S) centers, to quinones in the respiratory and/or the photosynthetic chain. The immediate electron acceptor for the enzyme in this species is believed to be plastoquinone. Couples the redox reaction to proton translocation, and thus conserves the redox energy in a proton gradient. In Prochlorococcus marinus (strain AS9601), this protein is NAD(P)H-quinone oxidoreductase subunit I.